A 697-amino-acid polypeptide reads, in one-letter code: Zinc finger and BTB domain-containing protein 24 (697 aa).

A BTB domain is found at 10 to 133; it reads GQLVVHSDAH…AYTDFQNNHS (124 aa). Positions 131–142 are enriched in polar residues; sequence NHSSPKPTTLNT. Disordered regions lie at residues 131-176 and 209-254; these read NHSS…EEKS and EQIA…SRYS. Positions 159–171 form a DNA-binding region, a.T hook; it reads KRKRGRPKKVNTL. Positions 212-245 are enriched in basic and acidic residues; it reads AAKEKEESEPTCEPSREEEMPVEKDENYDPKTED. C2H2-type zinc fingers lie at residues 294 to 316, 322 to 344, 350 to 372, 378 to 400, 406 to 428, 434 to 456, 462 to 484, and 490 to 512; these read ARCKDCGKVFKYNHFLAIHQRSH, FKCNECGKGFAQKHSLQVHTRMH, YTCTVCSKALTTKHSLLEHMSLH, FTCDQCGKYFSQNRQLKSHYRVH, PECKDCHRKFMDVSQLKKHLRTH, FTCEICGKSFTAKSSLQTHIRIH, YSCGICGKSFSDSSAKRRHCILH, and FSCPECNLQFARLDNLKAHLKIH. A disordered region spans residues 652 to 697; the sequence is QEQTEELHLATSTSDPAQHLQLTQEPGPPPPTHHVPQPTPLGQEQS. Pro residues predominate over residues 677–690; the sequence is PGPPPPTHHVPQPT.

Belongs to the krueppel C2H2-type zinc-finger protein family. In terms of assembly, interacts with MN1. In terms of tissue distribution, widely expressed, with highest levels in naive B-cells.

Its subcellular location is the nucleus. May be involved in BMP2-induced transcription. The polypeptide is Zinc finger and BTB domain-containing protein 24 (ZBTB24) (Homo sapiens (Human)).